The chain runs to 198 residues: tRNA (cytidine(56)-2'-O)-methyltransferase (198 aa).

S-adenosyl-L-methionine contacts are provided by residues Leu81, 110 to 114 (GAEKV), and 128 to 135 (IGNQPHSE). The disordered stretch occupies residues 178-198 (DAKQAEASGEGASRKNGQLPS).

This sequence belongs to the aTrm56 family. Homodimer.

Its subcellular location is the cytoplasm. The enzyme catalyses cytidine(56) in tRNA + S-adenosyl-L-methionine = 2'-O-methylcytidine(56) in tRNA + S-adenosyl-L-homocysteine + H(+). In terms of biological role, specifically catalyzes the AdoMet-dependent 2'-O-ribose methylation of cytidine at position 56 in tRNAs. The chain is tRNA (cytidine(56)-2'-O)-methyltransferase from Pyrococcus abyssi (strain GE5 / Orsay).